The chain runs to 209 residues: Neurotrophin-4 (209 aa).

A signal peptide spans Met-1–Met-21. The propeptide occupies Glu-22–Arg-79. N-linked (GlcNAc...) asparagine glycosylation is present at Asn-75. 3 cysteine pairs are disulfide-bonded: Cys-96/Cys-169, Cys-140/Cys-198, and Cys-157/Cys-200.

The protein belongs to the NGF-beta family.

Its subcellular location is the secreted. Target-derived survival factor for peripheral sensory sympathetic neurons. May promote ameloblast differentiation and subsequent reduction in proliferation of ameloblasts. This Mus musculus (Mouse) protein is Neurotrophin-4 (Ntf4).